A 289-amino-acid chain; its full sequence is Elongation factor Ts (289 aa).

The tract at residues 80–83 (TDFV) is involved in Mg(2+) ion dislocation from EF-Tu.

It belongs to the EF-Ts family.

It localises to the cytoplasm. Its function is as follows. Associates with the EF-Tu.GDP complex and induces the exchange of GDP to GTP. It remains bound to the aminoacyl-tRNA.EF-Tu.GTP complex up to the GTP hydrolysis stage on the ribosome. This is Elongation factor Ts from Francisella tularensis subsp. holarctica (strain LVS).